Here is a 1023-residue protein sequence, read N- to C-terminus: Probable histidine kinase 3 (1023 aa).

Over 1–80 (MDEMSCGGGG…RGWRVVRETW (80 aa)) the chain is Cytoplasmic. Residues 81-101 (WWVLLLWILAGSLGSFYLFLF) traverse the membrane as a helical segment. Topologically, residues 102-387 (MNAQSLDKRR…CRFEKKPPWP (286 aa)) are extracellular. The CHASE domain occupies 151-352 (TPSAIDQMTF…TNESPISMYG (202 aa)). The chain crosses the membrane as a helical span at residues 388-408 (WLAITSSFGTLVIALLTGHIF). Residues 409–1023 (QATVHRIAKV…RFFQNHDQVE (615 aa)) are Cytoplasmic-facing. The region spanning 445–715 (TVSHEIRTPM…TFTFTAVLMR (271 aa)) is the Histidine kinase domain. H448 carries the phosphohistidine; by autocatalysis modification. Response regulatory domains lie at 732–854 (NALV…RRAL) and 880–1016 (QIIV…ARFF). D783 carries the post-translational modification 4-aspartylphosphate. Residues 812–831 (LFLLGSSASSPKGGSDTSRE) form a disordered region. Residues 817 to 827 (SSASSPKGGSD) show a composition bias toward polar residues. D930 bears the 4-aspartylphosphate mark.

In terms of processing, activation probably requires a transfer of a phosphate group between a His in the transmitter domain and an Asp of the receiver domain. In terms of tissue distribution, highly expressed in young leaves and at lower levels in roots, mature leaves, stems and spikelets.

The protein resides in the cell membrane. The enzyme catalyses ATP + protein L-histidine = ADP + protein N-phospho-L-histidine.. Functionally, cytokinin receptor related to bacterial two-component regulators. Functions as a histidine kinase and transmits the stress signal to a downstream MAPK cascade. This chain is Probable histidine kinase 3, found in Oryza sativa subsp. japonica (Rice).